The chain runs to 194 residues: WASH complex subunit 3 (194 aa).

Residue M1 is modified to N-acetylmethionine. The stretch at 46–74 forms a coiled coil; sequence TVCEEKLADLSLRIQQIETTLNILDAKLS. The span at 98-123 shows a compositional bias: polar residues; sequence THSEATSEQSQQNSLQDSGPQESEVT. 2 disordered regions span residues 98 to 125 and 158 to 194; these read THSE…VTPE and SEGL…SFSD.

Belongs to the CCDC53 family. Component of the WASH core complex also described as WASH regulatory complex (SHRC) composed of WASHC1, WASHC2, WASHC3, WASHC4 and WASHC5. The WASH core complex associates via WASHC2 with the F-actin-capping protein dimer (formed by CAPZA1, CAPZA2 or CAPZA3 and CAPZB) in a transient or substoichiometric manner which was initially described as WASH complex.

It localises to the early endosome. Acts as a component of the WASH core complex that functions as a nucleation-promoting factor (NPF) at the surface of endosomes, where it recruits and activates the Arp2/3 complex to induce actin polymerization, playing a key role in the fission of tubules that serve as transport intermediates during endosome sorting. The sequence is that of WASH complex subunit 3 from Bos taurus (Bovine).